Consider the following 349-residue polypeptide: Peptide chain release factor 1 (349 aa).

Gln-233 is modified (N5-methylglutamine).

It belongs to the prokaryotic/mitochondrial release factor family. Methylated by PrmC. Methylation increases the termination efficiency of RF1.

The protein localises to the cytoplasm. Its function is as follows. Peptide chain release factor 1 directs the termination of translation in response to the peptide chain termination codons UAG and UAA. The protein is Peptide chain release factor 1 of Pelotomaculum thermopropionicum (strain DSM 13744 / JCM 10971 / SI).